Reading from the N-terminus, the 128-residue chain is Large ribosomal subunit protein bL12 (128 aa).

The protein belongs to the bacterial ribosomal protein bL12 family. In terms of assembly, homodimer. Part of the ribosomal stalk of the 50S ribosomal subunit. Forms a multimeric L10(L12)X complex, where L10 forms an elongated spine to which 2 to 4 L12 dimers bind in a sequential fashion. Binds GTP-bound translation factors.

Its function is as follows. Forms part of the ribosomal stalk which helps the ribosome interact with GTP-bound translation factors. Is thus essential for accurate translation. This chain is Large ribosomal subunit protein bL12, found in Halorhodospira halophila (strain DSM 244 / SL1) (Ectothiorhodospira halophila (strain DSM 244 / SL1)).